The primary structure comprises 121 residues: UPF0102 protein DehaBAV1_0707 (121 aa).

It belongs to the UPF0102 family.

This is UPF0102 protein DehaBAV1_0707 from Dehalococcoides mccartyi (strain ATCC BAA-2100 / JCM 16839 / KCTC 5957 / BAV1).